The chain runs to 391 residues: Paired box protein Pax-5 (391 aa).

The disordered stretch occupies residues 1–21 (MDLEKNYPTPRTSRTGHGGVN). A DNA-binding region (paired) is located at residues 16–142 (GHGGVNQLGG…SSINRIIRTK (127 aa)). The interval 19-75 (GVNQLGGVFVNGRPLPDVVRQRIVELAHQGVRPCDISRQLRVSHGCVSKILGRYYET) is PAI subdomain. Positions 94–142 (KVVEKIAEYKRQNPTMFAWEIRDRLLAERVCDNDTVPSVSSINRIIRTK) are RED subdomain. Residues 182–218 (SGILGITSPSADTNKRKRDEGIQESPVPNGHSLPGRD) are disordered.

In terms of assembly, interacts with ETS1; this interaction alters PAX5 DNA-binding properties. Binds DNA as a monomer. Interacts with TBP; this interaction allows PAX5 to interact with the basal transcription machinery. Interacts with RB1. Interacts with TLE4. Interacts with DAXX. (Microbial infection) Interacts (via N-terminus) with Epstein-Barr virus protein BZLF1 (via C-terminus); this interaction inhibits BZLF1-mediated lytic viral reactivation. Interacts also with EBNA1; this interaction promotes EBNA1-dependent transcription. Post-translationally, O-glycosylated. Phosphorylated by SYK. This phosphorylation plays an important role in the abolition of BLIMP1 repression by PAX5 in order to trigger plasma cell differentiation.

The protein resides in the nucleus. Transcription factor that plays an essential role in commitment of lymphoid progenitors to the B-lymphocyte lineage. Fulfills a dual role by repressing B-lineage inappropriate genes and simultaneously activating B-lineage-specific genes. In turn, regulates cell adhesion and migration, induces V(H)-to-D(H)J(H) recombination, facilitates pre-B-cell receptor signaling and promotes development to the mature B-cell stage. Repression of the cohesin-release factor WAPL causes global changes of the chromosomal architecture in pro-B cells to facilitate the generation of a diverse antibody repertoire. Its function is as follows. (Microbial infection) Plays an essential role in the maintenance of Epstein-Barr virus genome copy number within the host cell by promoting EBNA1/oriP-dependent binding and transcription. Also participates in the inhibition of lytic EBV reactivation by modulating viral BZLF1 activity. The protein is Paired box protein Pax-5 (PAX5) of Homo sapiens (Human).